Reading from the N-terminus, the 111-residue chain is Natriuretic peptide TNP-b (111 aa).

An N-terminal signal peptide occupies residues 1-27 (MVGLSRLAGGGLLLLLLLALLPLALDG). A propeptide spanning residues 28 to 71 (KPAPLPQALPEALAGGTTALRRDVTEEQQQQLVAEESSGPAAGR) is cleaved from the precursor. Disordered stretches follow at residues 51-77 (VTEEQQQQLVAEESSGPAAGRSDPKIG) and 92-111 (SGLGCNRPVQNRPKQIPGGS). A disulfide bridge connects residues C80 and C96. Residues 107 to 111 (IPGGS) constitute a propeptide that is removed on maturation.

This sequence belongs to the natriuretic peptide family. As to expression, expressed by the venom gland.

It localises to the secreted. Functionally, snake venom natriuretic peptide that exhibits vasoactive and probable hypotensive activity. Is only weakly active on natriuretic peptide receptor-C (NPR3). This Oxyuranus scutellatus scutellatus (Australian taipan) protein is Natriuretic peptide TNP-b.